Consider the following 205-residue polypeptide: Transcriptional regulator GfcR (205 aa).

The protein belongs to the purine/pyrimidine phosphoribosyltransferase family. GfcR subfamily.

This is Transcriptional regulator GfcR from Methanococcus maripaludis (strain C7 / ATCC BAA-1331).